The sequence spans 273 residues: NH(3)-dependent NAD(+) synthetase (273 aa).

Residue 34-41 (GLSGGIDS) coordinates ATP. D40 lines the Mg(2+) pocket. R116 provides a ligand contact to deamido-NAD(+). T136 contacts ATP. E141 lines the Mg(2+) pocket. K165 and S187 together coordinate ATP.

The protein belongs to the NAD synthetase family. As to quaternary structure, homodimer.

The enzyme catalyses deamido-NAD(+) + NH4(+) + ATP = AMP + diphosphate + NAD(+) + H(+). The protein operates within cofactor biosynthesis; NAD(+) biosynthesis; NAD(+) from deamido-NAD(+) (ammonia route): step 1/1. Its function is as follows. Catalyzes the ATP-dependent amidation of deamido-NAD to form NAD. Uses ammonia as a nitrogen source. The polypeptide is NH(3)-dependent NAD(+) synthetase (Trichlorobacter lovleyi (strain ATCC BAA-1151 / DSM 17278 / SZ) (Geobacter lovleyi)).